The primary structure comprises 310 residues: Phytoene synthase 2, chloroplastic (310 aa).

The transit peptide at 1–25 (DPDIVLPGNLGLLSEAYDRCGEVCA) directs the protein to the chloroplast.

The protein belongs to the phytoene/squalene synthase family. In terms of assembly, monomer.

It is found in the plastid. Its subcellular location is the chloroplast. The enzyme catalyses 2 (2E,6E,10E)-geranylgeranyl diphosphate = 15-cis-phytoene + 2 diphosphate. Its pathway is carotenoid biosynthesis; phytoene biosynthesis; all-trans-phytoene from geranylgeranyl diphosphate: step 1/1. In terms of biological role, catalyzes the reaction from prephytoene diphosphate to phytoene. This Solanum lycopersicum (Tomato) protein is Phytoene synthase 2, chloroplastic (PSY2).